A 479-amino-acid polypeptide reads, in one-letter code: UDP-N-acetylmuramoylalanine--D-glutamate ligase (479 aa).

ATP is bound at residue 110 to 116 (GTNGKTS).

Belongs to the MurCDEF family.

The protein localises to the cytoplasm. The enzyme catalyses UDP-N-acetyl-alpha-D-muramoyl-L-alanine + D-glutamate + ATP = UDP-N-acetyl-alpha-D-muramoyl-L-alanyl-D-glutamate + ADP + phosphate + H(+). Its pathway is cell wall biogenesis; peptidoglycan biosynthesis. In terms of biological role, cell wall formation. Catalyzes the addition of glutamate to the nucleotide precursor UDP-N-acetylmuramoyl-L-alanine (UMA). The sequence is that of UDP-N-acetylmuramoylalanine--D-glutamate ligase from Bifidobacterium adolescentis (strain ATCC 15703 / DSM 20083 / NCTC 11814 / E194a).